A 136-amino-acid polypeptide reads, in one-letter code: 1,4-dihydroxy-2-naphthoyl-CoA hydrolase (136 aa).

Glutamate 63 serves as the catalytic Nucleophile or proton acceptor. Substrate-binding positions include glycine 82, 89–92 (HVRS), and 106–111 (HLGSRH).

Belongs to the thioesterase PaaI family. Homotetramer. Dimer of dimers.

The enzyme catalyses 1,4-dihydroxy-2-naphthoyl-CoA + H2O = 1,4-dihydroxy-2-naphthoate + CoA + H(+). Its pathway is quinol/quinone metabolism; 1,4-dihydroxy-2-naphthoate biosynthesis; 1,4-dihydroxy-2-naphthoate from chorismate: step 7/7. It participates in quinol/quinone metabolism; menaquinone biosynthesis. Its function is as follows. Catalyzes the hydrolysis of 1,4-dihydroxy-2-naphthoyl-CoA (DHNA-CoA) to 1,4-dihydroxy-2-naphthoate (DHNA). Also shows significant activity toward a wide range of acyl-CoA thioesters, and minimal activity toward benzoyl-holoEntB. This chain is 1,4-dihydroxy-2-naphthoyl-CoA hydrolase, found in Escherichia coli (strain K12).